Reading from the N-terminus, the 66-residue chain is Conotoxin PnMLCL-01 (66 aa).

Positions 1 to 19 (MLCLPVFIILLLLASPAAS) are cleaved as a signal peptide. Residues 20 to 45 (NPLEKRIQSDLIRAALEDADTKNDPR) constitute a propeptide that is removed on maturation. A Cysteine amide modification is found at cysteine 63.

It belongs to the conotoxin T superfamily. In terms of processing, contains 2 disulfide bonds that can be either 'C1-C3, C2-C4' or 'C1-C4, C2-C3', since these disulfide connectivities have been observed for conotoxins with cysteine framework V (for examples, see AC P0DQQ7 and AC P81755). Expressed by the venom duct.

Its subcellular location is the secreted. This chain is Conotoxin PnMLCL-01, found in Conus pennaceus (Feathered cone).